Reading from the N-terminus, the 253-residue chain is U1 small nuclear ribonucleoprotein A (253 aa).

The RRM 1 domain occupies 23–102; that stretch reads VTIYINNLNE…KPMRIQYAKT (80 aa). The disordered stretch occupies residues 111–140; it reads DGTFVPRERRKRNDEKPEKKQKREQHHDVS. Positions 179–253 constitute an RRM 2 domain; that stretch reads NILFVQNLPH…NQMLISYAKK (75 aa).

This sequence belongs to the RRM U1 A/B'' family. Component of the spliceosome where it is associated with snRNP U1.

It is found in the nucleus. Its subcellular location is the nucleolus. Its function is as follows. Involved in nuclear pre-mRNA splicing. This is U1 small nuclear ribonucleoprotein A from Oryza sativa subsp. indica (Rice).